Consider the following 114-residue polypeptide: Large ribosomal subunit protein uL22 (114 aa).

Belongs to the universal ribosomal protein uL22 family. As to quaternary structure, part of the 50S ribosomal subunit.

In terms of biological role, this protein binds specifically to 23S rRNA; its binding is stimulated by other ribosomal proteins, e.g. L4, L17, and L20. It is important during the early stages of 50S assembly. It makes multiple contacts with different domains of the 23S rRNA in the assembled 50S subunit and ribosome. Functionally, the globular domain of the protein is located near the polypeptide exit tunnel on the outside of the subunit, while an extended beta-hairpin is found that lines the wall of the exit tunnel in the center of the 70S ribosome. In Streptococcus uberis (strain ATCC BAA-854 / 0140J), this protein is Large ribosomal subunit protein uL22.